We begin with the raw amino-acid sequence, 2556 residues long: Ubiquitin carboxyl-terminal hydrolase 9Y (2556 aa).

Positions 1 to 33 (MTITTRGSPVGENESQGQTSDGQPQPSFQQNQI) are enriched in polar residues. A disordered region spans residues 1 to 68 (MTITTRGSPV…QHEEEDPSFP (68 aa)). Over residues 34 to 44 (SSSDSSNETSP) the composition is skewed to low complexity. The residue at position 587 (Ser587) is a Phosphoserine. Thr589 bears the Phosphothreonine mark. The segment at 971–999 (NMPSSPDSSSDSSAGPPGNHSHNNYRDVS) is disordered. Over residues 973-983 (PSSPDSSSDSS) the composition is skewed to low complexity. The USP domain occupies 1559 to 1958 (VGLKNAGATC…NAYILFYERM (400 aa)). Catalysis depends on Cys1568, which acts as the Nucleophile. The Zn(2+) site is built by Cys1729, His1731, Cys1773, and Cys1776. Residue His1881 is the Proton acceptor of the active site. Residue Ser2447 is modified to Phosphoserine. A disordered region spans residues 2513–2556 (QNYVPEQPFSGPASHHLNNPQKNDKPQETHESNEEISSCLIKDQ). Residues 2534-2545 (KNDKPQETHESN) show a composition bias toward basic and acidic residues. At Ser2549 the chain carries Phosphoserine.

The protein belongs to the peptidase C19 family.

It carries out the reaction Thiol-dependent hydrolysis of ester, thioester, amide, peptide and isopeptide bonds formed by the C-terminal Gly of ubiquitin (a 76-residue protein attached to proteins as an intracellular targeting signal).. It participates in protein modification; protein ubiquitination. Its function is as follows. Deubiquitinase that mediates deubiquitination of target proteins. May stabilize target proteins that are important for male germ cell development. This Mus musculus (Mouse) protein is Ubiquitin carboxyl-terminal hydrolase 9Y.